Consider the following 389-residue polypeptide: snRNA-activating protein complex subunit 1 (389 aa).

A compositionally biased stretch (low complexity) spans 1-15; the sequence is MGTPAGAGTRPTGAG. Disordered stretches follow at residues 1–22, 245–276, and 290–389; these read MGTPAGAGTRPTGAGTVEGVGI, WHKERKNPSLKPKLKDGEENGEGSSEEPERCE, and SAVV…KRKC. Residues 20-187 are SNAPC3-binding; that stretch reads VGIPPGLQTD…QKFKDPNDRV (168 aa). The interval 183–287 is SNAPC4-binding; sequence PNDRVMKLIT…AVSLAKIKAK (105 aa). Over residues 245-262 the composition is skewed to basic and acidic residues; sequence WHKERKNPSLKPKLKDGE. Phosphoserine occurs at positions 308 and 309.

As to quaternary structure, part of the SNAPc complex composed of 5 subunits: SNAPC1, SNAPC2, SNAPC3, SNAPC4 and SNAPC5. SNAPC1 interacts with SNAPC3, SNAPC4 and TBP.

It is found in the nucleus. Functionally, part of the SNAPc complex required for the transcription of both RNA polymerase II and III small-nuclear RNA genes. Binds to the proximal sequence element (PSE), a non-TATA-box basal promoter element common to these 2 types of genes. Recruits TBP and BRF2 to the U6 snRNA TATA box. The chain is snRNA-activating protein complex subunit 1 (Snapc1) from Mus musculus (Mouse).